The chain runs to 103 residues: Pterin-4-alpha-carbinolamine dehydratase 2 (103 aa).

It belongs to the pterin-4-alpha-carbinolamine dehydratase family. As to expression, highest level found in the kidney, liver, heart and ovarian follicles.

It carries out the reaction (4aS,6R)-4a-hydroxy-L-erythro-5,6,7,8-tetrahydrobiopterin = (6R)-L-erythro-6,7-dihydrobiopterin + H2O. In terms of biological role, involved in tetrahydrobiopterin biosynthesis. Seems to both prevent the formation of 7-pterins and accelerate the formation of quinonoid-BH2. Regulates the dimerization of homeodomain protein HNF-1-alpha and enhances its transcriptional activity. In Gallus gallus (Chicken), this protein is Pterin-4-alpha-carbinolamine dehydratase 2 (PCBD2).